Consider the following 301-residue polypeptide: Pantothenate synthetase (301 aa).

30–37 (MGNLHEGH) contacts ATP. The active-site Proton donor is the His37. (R)-pantoate is bound at residue Gln61. Beta-alanine is bound at residue Gln61. ATP is bound at residue 149–152 (GEKD). Position 155 (Gln155) interacts with (R)-pantoate. ATP contacts are provided by residues Val178 and 186 to 189 (MSSR).

It belongs to the pantothenate synthetase family. Homodimer.

The protein resides in the cytoplasm. It carries out the reaction (R)-pantoate + beta-alanine + ATP = (R)-pantothenate + AMP + diphosphate + H(+). Its pathway is cofactor biosynthesis; (R)-pantothenate biosynthesis; (R)-pantothenate from (R)-pantoate and beta-alanine: step 1/1. Functionally, catalyzes the condensation of pantoate with beta-alanine in an ATP-dependent reaction via a pantoyl-adenylate intermediate. In Vibrio parahaemolyticus serotype O3:K6 (strain RIMD 2210633), this protein is Pantothenate synthetase.